The following is a 462-amino-acid chain: Ketoisovalerate reductase (462 aa).

The segment at 34–55 (PTAVKPDRADRGDFDPGKYPVD) is disordered. The segment covering 38–49 (KPDRADRGDFDP) has biased composition (basic and acidic residues). 72-77 (GPGNVG) contributes to the NADP(+) binding site. The short motif at 167–184 (ADRLRRYLGRCSSVVFAQ) is the Calmoduling-binding element. Lys290 functions as the Proton donor in the catalytic mechanism. Substrate is bound by residues Asn294, Asn298, and Ser403. Glu415 lines the NADP(+) pocket.

Belongs to the ketopantoate reductase family. In terms of assembly, homodimer. Binds to calmodulin in a calcium-independent manner.

The enzyme catalyses (R)-2-hydroxy-3-methylbutanoate + NADP(+) = 3-methyl-2-oxobutanoate + NADPH + H(+). Environmental stimuli such as light and salt stress suppress activity through stimulation of calmodulin (CaM) that binds BEA2 and probably impairs its dimerization. Its function is as follows. Ketoisovalerate reductase; part of the gene cluster that mediates the biosynthesis of beauvericin (BEA), a non-ribosomal cyclic hexadepsipeptide that shows antibiotic, antifungal, insecticidal, and cancer cell antiproliferative and antihaptotactic activity. Ketoisovalerate reductase BEA2 catalyzes the NADPH-specific reduction of ketoisovaleric acid to hydroxyisovalerate, a precursor for beauvericin biosynthesis. The nonribosomal cyclodepsipeptide synthetase BEA1 then catalyzes the formation of beauvericin via condensation and cyclization of 3 dipeptidol monomers, each composed of one unit of hydroxyisovalerate and one unit of N-methyl-phenylalanine. In Beauveria bassiana (White muscardine disease fungus), this protein is Ketoisovalerate reductase.